A 213-amino-acid polypeptide reads, in one-letter code: MAQYTAPEFEELHIHMLCYRLHCDNKDNCELCKAGWEIIRKGTGHMIRDLLSKRDRRLAGSNIIGISLGEMDVFSARKIQEDNTDYNKTAGLINEIETSFPGMNFIKHVGGDLFKRCSQYTPFLKHADELYSTLKTVYNYFIRPTDNVPLDVIFNHITLCCHFSYILVTNPNSIWLLHTIHLTTDNILLINKHSGRNGEWIKWNVCAENSSRS.

This is an uncharacterized protein from Magallana gigas (Pacific oyster).